The chain runs to 483 residues: ATP synthase subunit beta (483 aa).

ATP is bound at residue 162–169 (GGAGVGKT).

The protein belongs to the ATPase alpha/beta chains family. In terms of assembly, F-type ATPases have 2 components, CF(1) - the catalytic core - and CF(0) - the membrane proton channel. CF(1) has five subunits: alpha(3), beta(3), gamma(1), delta(1), epsilon(1). CF(0) has four main subunits: a(1), b(1), b'(1) and c(9-12).

It localises to the cellular thylakoid membrane. The catalysed reaction is ATP + H2O + 4 H(+)(in) = ADP + phosphate + 5 H(+)(out). Produces ATP from ADP in the presence of a proton gradient across the membrane. The catalytic sites are hosted primarily by the beta subunits. The sequence is that of ATP synthase subunit beta from Rippkaea orientalis (strain PCC 8801 / RF-1) (Cyanothece sp. (strain PCC 8801)).